The primary structure comprises 151 residues: Acidic phospholipase A2 1 (151 aa).

A signal peptide spans M1–S21. Positions I22 to L27 are excised as a propeptide. Intrachain disulfides connect C38/C104, C54/C151, C56/C72, C71/C132, C78/C125, C88/C118, and C111/C123. Residues Y55, G57, and G59 each contribute to the Ca(2+) site. H75 is a catalytic residue. Ca(2+) is bound at residue D76. The active site involves D126.

Requires Ca(2+) as cofactor. As to expression, expressed by the venom gland.

Its subcellular location is the secreted. It carries out the reaction a 1,2-diacyl-sn-glycero-3-phosphocholine + H2O = a 1-acyl-sn-glycero-3-phosphocholine + a fatty acid + H(+). In terms of biological role, snake venom phospholipase A2 (PLA2) that may exhibit cardiotoxicity, myotoxicity, antiplatelet activity, and edema-inducing activity. PLA2 catalyzes the calcium-dependent hydrolysis of the 2-acyl groups in 3-sn-phosphoglycerides. The chain is Acidic phospholipase A2 1 from Ophiophagus hannah (King cobra).